The following is a 314-amino-acid chain: Homoserine O-succinyltransferase (314 aa).

Cysteine 142 functions as the Acyl-thioester intermediate in the catalytic mechanism. Substrate is bound by residues lysine 163 and serine 192. Histidine 235 acts as the Proton acceptor in catalysis. Glutamate 237 is an active-site residue. Arginine 249 is a binding site for substrate.

This sequence belongs to the MetA family.

The protein localises to the cytoplasm. It catalyses the reaction L-homoserine + succinyl-CoA = O-succinyl-L-homoserine + CoA. Its pathway is amino-acid biosynthesis; L-methionine biosynthesis via de novo pathway; O-succinyl-L-homoserine from L-homoserine: step 1/1. Functionally, transfers a succinyl group from succinyl-CoA to L-homoserine, forming succinyl-L-homoserine. The polypeptide is Homoserine O-succinyltransferase (Shewanella pealeana (strain ATCC 700345 / ANG-SQ1)).